A 464-amino-acid polypeptide reads, in one-letter code: Probable glycine dehydrogenase (decarboxylating) subunit 1 (464 aa).

Belongs to the GcvP family. N-terminal subunit subfamily. As to quaternary structure, the glycine cleavage system is composed of four proteins: P, T, L and H. In this organism, the P 'protein' is a heterodimer of two subunits.

The catalysed reaction is N(6)-[(R)-lipoyl]-L-lysyl-[glycine-cleavage complex H protein] + glycine + H(+) = N(6)-[(R)-S(8)-aminomethyldihydrolipoyl]-L-lysyl-[glycine-cleavage complex H protein] + CO2. Its function is as follows. The glycine cleavage system catalyzes the degradation of glycine. The P protein binds the alpha-amino group of glycine through its pyridoxal phosphate cofactor; CO(2) is released and the remaining methylamine moiety is then transferred to the lipoamide cofactor of the H protein. The protein is Probable glycine dehydrogenase (decarboxylating) subunit 1 of Thiobacillus denitrificans (strain ATCC 25259 / T1).